We begin with the raw amino-acid sequence, 559 residues long: WD repeat-containing protein JIP5 (559 aa).

9 WD repeats span residues 26-67, 77-116, 117-156, 162-201, 207-247, 265-306, 313-347, 354-394, and 428-470; these read QYSD…NYLQ, ADGKKSKKVKFWTVYDIINENKDNADTGSDSGVELIWKTK, RHKGSVRCIALDSDGQFVYTVGTDNVLKKADVLTGKVVKK, DNGGKYTKMVKSPTHSLLILGDENGTVIVLNSETLQETNR, NGDD…ESDF, DQED…LEDQ, AKEESIDCIVPTLQDDNCIWCGCSNGNIYKADIKK, RNHS…SEEE, and DSDG…SDDE. 2 disordered regions span residues 386–500 and 515–559; these read SRNE…LIGL and EESE…FEGL. Residues 391–417 are compositionally biased toward acidic residues; that stretch reads SEEEDDEESESFSDSDSDSDSDSDSDS. The span at 418–428 shows a compositional bias: basic and acidic residues; it reads DSDRDRDRDSD. Acidic residues predominate over residues 482 to 494; the sequence is DMDDIDEGSDSSE. Over residues 520–534 the composition is skewed to basic and acidic residues; it reads EGEKLQKKRKNEPSK. Basic residues predominate over residues 535-544; the sequence is KNTKNLKKVK.

Belongs to the WD repeat WDR55 family.

The protein resides in the nucleus. The protein localises to the nucleolus. The polypeptide is WD repeat-containing protein JIP5 (JIP5) (Vanderwaltozyma polyspora (strain ATCC 22028 / DSM 70294 / BCRC 21397 / CBS 2163 / NBRC 10782 / NRRL Y-8283 / UCD 57-17) (Kluyveromyces polysporus)).